An 856-amino-acid polypeptide reads, in one-letter code: Genome polyprotein (856 aa).

The 144-residue stretch at 141–284 (KLTEGQMNHL…QSVLNSMIQF (144 aa)) folds into the Peptidase S30 domain. Catalysis depends on for P1 proteinase activity residues H192, D201, and S235. The Involved in interaction with stylet and aphid transmission motif lies at 334–337 (KITC). Residues 592–594 (PTK) carry the Involved in virions binding and aphid transmission motif. The 123-residue stretch at 618–740 (LYIAKQGYCY…ESDIKHYRVG (123 aa)) folds into the Peptidase C6 domain. Active-site for helper component proteinase activity residues include C626 and H699.

The protein belongs to the potyviridae genome polyprotein family. Genome polyprotein of potyviruses undergoes post-translational proteolytic processing by the main proteinase NIa-pro resulting in the production of at least ten individual proteins. The P1 proteinase and the HC-pro cleave only their respective C-termini autocatalytically. 6K1 is essential for proper proteolytic separation of P3 from CI.

The catalysed reaction is Hydrolyzes a Gly-|-Gly bond at its own C-terminus, commonly in the sequence -Tyr-Xaa-Val-Gly-|-Gly, in the processing of the potyviral polyprotein.. Required for aphid transmission and also has proteolytic activity. Only cleaves a Gly-Gly dipeptide at its own C-terminus. Interacts with virions and aphid stylets. Acts as a suppressor of RNA-mediated gene silencing, also known as post-transcriptional gene silencing (PTGS), a mechanism of plant viral defense that limits the accumulation of viral RNAs. May have RNA-binding activity. The chain is Genome polyprotein from Potato virus Y (strain O) (PVY).